The sequence spans 80 residues: MDNDEIFSKVRSIISEQLDKKEDEITIDSRFVEDLNADSLDIYELLYLLEEAFDDKIPENEANEFETVGDVVNFIKKRKG.

The Carrier domain occupies 4–79; it reads DEIFSKVRSI…DVVNFIKKRK (76 aa). An O-(pantetheine 4'-phosphoryl)serine modification is found at Ser-39.

The protein belongs to the acyl carrier protein (ACP) family. 4'-phosphopantetheine is transferred from CoA to a specific serine of apo-ACP by AcpS. This modification is essential for activity because fatty acids are bound in thioester linkage to the sulfhydryl of the prosthetic group.

The protein resides in the cytoplasm. It functions in the pathway lipid metabolism; fatty acid biosynthesis. Its function is as follows. Carrier of the growing fatty acid chain in fatty acid biosynthesis. The polypeptide is Acyl carrier protein (Borrelia garinii subsp. bavariensis (strain ATCC BAA-2496 / DSM 23469 / PBi) (Borreliella bavariensis)).